An 84-amino-acid polypeptide reads, in one-letter code: CDC42 small effector protein 2-A (84 aa).

Residues C10 and C11 are each lipidated (S-palmitoyl cysteine). Positions 29 to 42 constitute a CRIB domain; the sequence is IGEPTNFVHTAHVG.

The protein belongs to the CDC42SE/SPEC family.

It is found in the cytoplasm. The protein resides in the cytoskeleton. Its subcellular location is the cell membrane. In terms of biological role, probably involved in the organization of the actin cytoskeleton by acting downstream of CDC42, inducing actin filament assembly. The polypeptide is CDC42 small effector protein 2-A (cdc42se2-a) (Xenopus laevis (African clawed frog)).